A 453-amino-acid chain; its full sequence is Bifunctional protein GlmU (453 aa).

Residues methionine 1 to arginine 226 form a pyrophosphorylase region. UDP-N-acetyl-alpha-D-glucosamine contacts are provided by residues leucine 7–glycine 10, lysine 21, glutamine 72, glycine 77–threonine 78, tyrosine 99–aspartate 101, glycine 136, glutamate 151, asparagine 166, and asparagine 224. Aspartate 101 serves as a coordination point for Mg(2+). A Mg(2+)-binding site is contributed by asparagine 224. The tract at residues glutamine 227–alanine 247 is linker. Residues glycine 248–serine 453 form an N-acetyltransferase region. 2 residues coordinate UDP-N-acetyl-alpha-D-glucosamine: arginine 330 and lysine 348. The active-site Proton acceptor is histidine 360. Positions 363 and 374 each coordinate UDP-N-acetyl-alpha-D-glucosamine. Residues alanine 377, asparagine 383–tyrosine 384, serine 402, alanine 420, and arginine 437 contribute to the acetyl-CoA site.

It in the N-terminal section; belongs to the N-acetylglucosamine-1-phosphate uridyltransferase family. The protein in the C-terminal section; belongs to the transferase hexapeptide repeat family. Homotrimer. Mg(2+) serves as cofactor.

Its subcellular location is the cytoplasm. The enzyme catalyses alpha-D-glucosamine 1-phosphate + acetyl-CoA = N-acetyl-alpha-D-glucosamine 1-phosphate + CoA + H(+). It carries out the reaction N-acetyl-alpha-D-glucosamine 1-phosphate + UTP + H(+) = UDP-N-acetyl-alpha-D-glucosamine + diphosphate. Its pathway is nucleotide-sugar biosynthesis; UDP-N-acetyl-alpha-D-glucosamine biosynthesis; N-acetyl-alpha-D-glucosamine 1-phosphate from alpha-D-glucosamine 6-phosphate (route II): step 2/2. It participates in nucleotide-sugar biosynthesis; UDP-N-acetyl-alpha-D-glucosamine biosynthesis; UDP-N-acetyl-alpha-D-glucosamine from N-acetyl-alpha-D-glucosamine 1-phosphate: step 1/1. It functions in the pathway bacterial outer membrane biogenesis; LPS lipid A biosynthesis. Its function is as follows. Catalyzes the last two sequential reactions in the de novo biosynthetic pathway for UDP-N-acetylglucosamine (UDP-GlcNAc). The C-terminal domain catalyzes the transfer of acetyl group from acetyl coenzyme A to glucosamine-1-phosphate (GlcN-1-P) to produce N-acetylglucosamine-1-phosphate (GlcNAc-1-P), which is converted into UDP-GlcNAc by the transfer of uridine 5-monophosphate (from uridine 5-triphosphate), a reaction catalyzed by the N-terminal domain. The polypeptide is Bifunctional protein GlmU (Cellvibrio japonicus (strain Ueda107) (Pseudomonas fluorescens subsp. cellulosa)).